The primary structure comprises 313 residues: Solute carrier family 35 member E3 (313 aa).

Helical transmembrane passes span 17 to 37 (GLLF…WIYV), 40 to 60 (GFPN…GLYI), 71 to 91 (SLPL…VVFT), 126 to 146 (FSVR…LNSY), 154 to 174 (LGMV…VWVG), 187 to 206 (LLYY…VPFF), 225 to 245 (LMVL…YWII), 252 to 272 (TYNM…YILF), and 275 to 295 (PLSV…LTYT).

Belongs to the TPT transporter family. SLC35E subfamily.

The protein localises to the membrane. Functionally, putative transporter. The chain is Solute carrier family 35 member E3 (Slc35e3) from Mus musculus (Mouse).